An 80-amino-acid polypeptide reads, in one-letter code: UPF0180 protein GK1051 (80 aa).

It belongs to the UPF0180 family.

This is UPF0180 protein GK1051 from Geobacillus kaustophilus (strain HTA426).